Reading from the N-terminus, the 232-residue chain is Ion-translocating oxidoreductase complex subunit E (232 aa).

Transmembrane regions (helical) follow at residues 39-59 (LGLG…ISSL), 69-89 (IPIY…LINA), 92-112 (FGLY…CIVV), 125-145 (ALSA…MFVL), and 182-202 (PFLL…MLAV).

It belongs to the NqrDE/RnfAE family. In terms of assembly, the complex is composed of six subunits: RnfA, RnfB, RnfC, RnfD, RnfE and RnfG.

It localises to the cell inner membrane. In terms of biological role, part of a membrane-bound complex that couples electron transfer with translocation of ions across the membrane. In Klebsiella pneumoniae (strain 342), this protein is Ion-translocating oxidoreductase complex subunit E.